The chain runs to 469 residues: Cholesterol 7-desaturase nvd (469 aa).

An N-terminal signal peptide occupies residues 1 to 25 (MASFCASKFLPGLLMLGLGLAVALA). The helical transmembrane segment at 58–78 (NFVASQTLLTLTIFGVASFIL) threads the bilayer. Residues 132-238 (IPLVASQDLV…VIEQNGFVLV (107 aa)) form the Rieske domain. [2Fe-2S] cluster contacts are provided by cysteine 172, histidine 174, cysteine 192, and histidine 195.

It belongs to the cholesterol 7-desaturase family. [2Fe-2S] cluster serves as cofactor.

The protein localises to the membrane. The enzyme catalyses cholesterol + NADPH + O2 + H(+) = 7-dehydrocholesterol + NADP(+) + 2 H2O. It carries out the reaction cholesterol + NADH + O2 + H(+) = 7-dehydrocholesterol + NAD(+) + 2 H2O. Its pathway is steroid hormone biosynthesis; dafachronic acid biosynthesis. Functionally, catalyzes the production of 7-dehydrocholesterol (7-DHC or cholesta-5,7-dien-3beta-ol) by inserting a double bond (desaturating) at the C7-C8 single bond of cholesterol. Essential regulator of steroid biosynthesis as this reaction is the first step in the synthesis of the steroid hormone Delta(7)-dafachronic acid. The chain is Cholesterol 7-desaturase nvd from Hemicentrotus pulcherrimus (Sea urchin).